Here is a 415-residue protein sequence, read N- to C-terminus: Mitogen-activated protein kinase mpkC (415 aa).

One can recognise a Protein kinase domain in the interval 20-299; it reads YANLQPVGLG…AEQGLMHPWM (280 aa). ATP-binding positions include 26–34 and lysine 49; that span reads VGLGTAGVV. The active-site Proton acceptor is aspartate 141. Threonine 171 carries the post-translational modification Phosphothreonine. The TXY signature appears at 171-173; it reads TGY. Tyrosine 173 carries the post-translational modification Phosphotyrosine.

Belongs to the protein kinase superfamily. Ser/Thr protein kinase family. MAP kinase subfamily. HOG1 sub-subfamily. The cofactor is Mg(2+). In terms of processing, dually phosphorylated on Thr-171 and Tyr-173, which activates the enzyme.

It carries out the reaction L-seryl-[protein] + ATP = O-phospho-L-seryl-[protein] + ADP + H(+). The enzyme catalyses L-threonyl-[protein] + ATP = O-phospho-L-threonyl-[protein] + ADP + H(+). With respect to regulation, activated by tyrosine and threonine phosphorylation. In terms of biological role, mitogen-activated protein kinase required for growth on media where sorbitol or mannitol is the sole carbon source. The protein is Mitogen-activated protein kinase mpkC (mpkC) of Emericella nidulans (strain FGSC A4 / ATCC 38163 / CBS 112.46 / NRRL 194 / M139) (Aspergillus nidulans).